Reading from the N-terminus, the 498-residue chain is ATP synthase subunit beta, chloroplastic (498 aa).

Position 172-179 (172-179) interacts with ATP; sequence GGAGVGKT.

Belongs to the ATPase alpha/beta chains family. As to quaternary structure, F-type ATPases have 2 components, CF(1) - the catalytic core - and CF(0) - the membrane proton channel. CF(1) has five subunits: alpha(3), beta(3), gamma(1), delta(1), epsilon(1). CF(0) has four main subunits: a(1), b(1), b'(1) and c(9-12).

Its subcellular location is the plastid. It localises to the chloroplast thylakoid membrane. It catalyses the reaction ATP + H2O + 4 H(+)(in) = ADP + phosphate + 5 H(+)(out). Produces ATP from ADP in the presence of a proton gradient across the membrane. The catalytic sites are hosted primarily by the beta subunits. The sequence is that of ATP synthase subunit beta, chloroplastic from Canella winterana (Wild cinnamon).